Consider the following 209-residue polypeptide: Tektin bundle-interacting protein 1 (209 aa).

As to quaternary structure, microtubule inner protein component of sperm flagellar doublet microtubules.

The protein localises to the cytoplasm. It is found in the cytoskeleton. It localises to the cilium axoneme. Its subcellular location is the flagellum axoneme. Its function is as follows. Microtubule inner protein (MIP) part of the dynein-decorated doublet microtubules (DMTs) in cilia axoneme, which is required for motile cilia beating. Located at the center of the tektin bundle where may function to recruit tektins or stabilize the bundle. This Homo sapiens (Human) protein is Tektin bundle-interacting protein 1.